Reading from the N-terminus, the 647-residue chain is Threonine--tRNA ligase (647 aa).

The TGS domain maps to 1–61 (MIKITFPDGA…EEDGSIEIVT (61 aa)). Positions 240 to 538 (DHRKLGKELD…LIETYKGAFP (299 aa)) are catalytic. Zn(2+)-binding residues include Cys-334, His-385, and His-515.

The protein belongs to the class-II aminoacyl-tRNA synthetase family. As to quaternary structure, homodimer. It depends on Zn(2+) as a cofactor.

It localises to the cytoplasm. The catalysed reaction is tRNA(Thr) + L-threonine + ATP = L-threonyl-tRNA(Thr) + AMP + diphosphate + H(+). Catalyzes the attachment of threonine to tRNA(Thr) in a two-step reaction: L-threonine is first activated by ATP to form Thr-AMP and then transferred to the acceptor end of tRNA(Thr). Also edits incorrectly charged L-seryl-tRNA(Thr). This is Threonine--tRNA ligase from Streptococcus pyogenes serotype M28 (strain MGAS6180).